The primary structure comprises 177 residues: Small ribosomal subunit protein uS5 (177 aa).

Residues 19-82 enclose the S5 DRBM domain; the sequence is WQERVVQIRR…ADGKKQLVEV (64 aa).

The protein belongs to the universal ribosomal protein uS5 family. In terms of assembly, part of the 30S ribosomal subunit. Contacts proteins S4 and S8.

Its function is as follows. With S4 and S12 plays an important role in translational accuracy. In terms of biological role, located at the back of the 30S subunit body where it stabilizes the conformation of the head with respect to the body. This Acaryochloris marina (strain MBIC 11017) protein is Small ribosomal subunit protein uS5.